The following is a 275-amino-acid chain: Bis(5'-nucleosyl)-tetraphosphatase, symmetrical (275 aa).

The protein belongs to the Ap4A hydrolase family.

The enzyme catalyses P(1),P(4)-bis(5'-adenosyl) tetraphosphate + H2O = 2 ADP + 2 H(+). Functionally, hydrolyzes diadenosine 5',5'''-P1,P4-tetraphosphate to yield ADP. The polypeptide is Bis(5'-nucleosyl)-tetraphosphatase, symmetrical (Stutzerimonas stutzeri (strain A1501) (Pseudomonas stutzeri)).